Consider the following 1766-residue polypeptide: Putative ATP-dependent RNA helicase R366 (1766 aa).

A disordered region spans residues 209–239 (KSSSNQNSNQSNQESNESNQEPNESNQEINQ). A compositionally biased stretch (low complexity) spans 210 to 239 (SSSNQNSNQSNQESNESNQEPNESNQEINQ). Residues 656–865 (YHHYSNNRVL…RYYRRINDNR (210 aa)) enclose the Helicase ATP-binding domain. 669–676 (GATGVGKS) lines the ATP pocket. Positions 812–815 (DEAH) match the DEAH box motif. The 170-residue stretch at 947–1116 (DIHKSIKAIN…TMVKLIKSYP (170 aa)) folds into the Helicase C-terminal domain.

This sequence belongs to the DEAD box helicase family. DEAH subfamily.

It carries out the reaction ATP + H2O = ADP + phosphate + H(+). The sequence is that of Putative ATP-dependent RNA helicase R366 from Acanthamoeba polyphaga mimivirus (APMV).